Consider the following 583-residue polypeptide: Isocitrate dehydrogenase kinase/phosphatase (583 aa).

ATP contacts are provided by residues 315-321 (APGIRGM) and K336. Residue D371 is part of the active site.

This sequence belongs to the AceK family.

It is found in the cytoplasm. It carries out the reaction L-seryl-[isocitrate dehydrogenase] + ATP = O-phospho-L-seryl-[isocitrate dehydrogenase] + ADP + H(+). Functionally, bifunctional enzyme which can phosphorylate or dephosphorylate isocitrate dehydrogenase (IDH) on a specific serine residue. This is a regulatory mechanism which enables bacteria to bypass the Krebs cycle via the glyoxylate shunt in response to the source of carbon. When bacteria are grown on glucose, IDH is fully active and unphosphorylated, but when grown on acetate or ethanol, the activity of IDH declines drastically concomitant with its phosphorylation. The sequence is that of Isocitrate dehydrogenase kinase/phosphatase from Salmonella enteritidis PT4 (strain P125109).